A 366-amino-acid chain; its full sequence is MAGPAWISKVSRLLGAFHNQKQVTRGFAGGVKTVTLIPGDGIGPEISAAVMKIFDAAKAPIQWEERNVTAIQGPGGKWMIPPEAKESMDKNKMGLKGPLKTPIAAGHPSMNLLLRKTFDLYANVRPCVSIEGYKTPYTDVNIVTIRENTEGEYSGIEHVIVDGVVQSIKLITEGASKRIAEFAFEYARNNHRSNVTAVHKANIMRMSDGLFLQKCREVAENCKDIKFNEMYLDTVCLNMVQDPSQFDVLVMPNLYGDILSDLCAGLIGGLGVTPSGNIGANGVAIFESVHGTAPDIAGKDMANPTALLLSAVMMLRHMGLFDHAAKIETACFATIKDGKSLTKDLGGNAKCSDFTEEICRRVKDLD.

A mitochondrion-targeting transit peptide spans 1–27 (MAGPAWISKVSRLLGAFHNQKQVTRGF). N6-succinyllysine is present on K77. The residue at position 101 (T101) is a Phosphothreonine. R115, R125, and R146 together coordinate substrate. Residue K223 is modified to N6-acetyllysine. Mg(2+) is bound by residues D233, D257, and D261. K343 carries the post-translational modification N6-acetyllysine; alternate. K343 carries the N6-succinyllysine; alternate modification. Position 350 is an N6-succinyllysine (K350).

The protein belongs to the isocitrate and isopropylmalate dehydrogenases family. Heterooligomer of subunits alpha (IDH3A), beta (IDH3B), and gamma (IDH3G) in the apparent ratio of 2:1:1. The heterodimer containing one IDH3A and one IDH3B subunit and the heterodimer containing one IDH3A and one IDH3G subunit assemble into a heterotetramer (which contains two subunits of IDH3A, one of IDH3B and one of IDH3G) and further into the heterooctamer. Requires Mg(2+) as cofactor. The cofactor is Mn(2+).

The protein resides in the mitochondrion. It carries out the reaction D-threo-isocitrate + NAD(+) = 2-oxoglutarate + CO2 + NADH. With respect to regulation, the heterotetramer and the heterodimer composed of IDH3A and IDH3G subunits can be allosterically activated by citrate (CIT) or/and ADP, and the two activators can act independently or synergistically. The heterodimer composed of IDH3A and IDH3B subunits cannot be allosterically regulated and the allosteric regulation of the heterotetramer is through the IDH3G subunit and not the IDH3B subunit. The IDH3G subunit contains the allosteric site which consists of a CIT-binding site and an ADP-binding site, and the binding of CIT and ADP causes conformational changes at the allosteric site which are transmitted to the active site in the catalytic subunit (IDH3A) through a cascade of conformational changes at the heterodimer interface, leading to stabilization of the isocitrate-binding at the active site and thus activation of the enzyme. ATP can activate the heterotetramer and the heterodimer composed of IDH3A and IDH3G subunits at low concentrations but inhibits their activities at high concentrations, whereas ATP exhibits only inhibitory effect on the heterodimer composed of IDH3A and IDH3B subunits. In terms of biological role, catalytic subunit of the enzyme which catalyzes the decarboxylation of isocitrate (ICT) into alpha-ketoglutarate. The heterodimer composed of the alpha (IDH3A) and beta (IDH3B) subunits and the heterodimer composed of the alpha (IDH3A) and gamma (IDH3G) subunits, have considerable basal activity but the full activity of the heterotetramer (containing two subunits of IDH3A, one of IDH3B and one of IDH3G) requires the assembly and cooperative function of both heterodimers. In Sus scrofa (Pig), this protein is Isocitrate dehydrogenase [NAD] subunit alpha, mitochondrial (IDH3A).